Reading from the N-terminus, the 172-residue chain is Co-chaperone protein HscB homolog (172 aa).

The J domain occupies 2–69; that stretch reads NHFELFNLPV…DSRAAYLLAL (68 aa).

It belongs to the HscB family. Interacts with HscA and stimulates its ATPase activity.

In terms of biological role, co-chaperone involved in the maturation of iron-sulfur cluster-containing proteins. Seems to help targeting proteins to be folded toward HscA. This is Co-chaperone protein HscB homolog from Acinetobacter baumannii (strain SDF).